We begin with the raw amino-acid sequence, 845 residues long: P protein (845 aa).

A disordered region spans residues 1–57 (MRLENREGRPTSGVLEMELPQASAPSRAGLGSLGLVGLDSSNHRPQQGGSKAGSRGP). Residues 1–183 (MRLENREGRP…HLSKLRCCVQ (183 aa)) are Extracellular-facing. Low complexity predominate over residues 26–40 (SRAGLGSLGLVGLDS). A helical membrane pass occupies residues 184 to 204 (WLKVSGLFVFVVLCSILFSLY). Residues 205–337 (PDQGKFWQLL…QYLRASIEAQ (133 aa)) lie on the Cytoplasmic side of the membrane. Residues 338 to 358 (VTIAAVILAGVYVLIIFEIVH) form a helical membrane-spanning segment. Over 359 to 360 (RT) the chain is Extracellular. A helical membrane pass occupies residues 361 to 381 (LAAMLGSLAALAALAVIGDRP). Over 382–393 (TLTQVVEWIDFE) the chain is Cytoplasmic. The helical transmembrane segment at 394-414 (TLALLFGMMILVAIFSETGFF) threads the bilayer. The Extracellular segment spans residues 415 to 429 (DYCAVKAYQLSRGRV). Residues 430 to 450 (WAMIIMLCLIAAVLSAFLDNV) traverse the membrane as a helical segment. Residues 451–513 (TTALLFTPVT…ELRKMGLDFA (63 aa)) are Cytoplasmic-facing. The helical transmembrane segment at 514–534 (GFTAHMFAGICFVLLFSFPLL) threads the bilayer. The Extracellular segment spans residues 535 to 629 (RLLYWNRKLY…KKHRISDRTL (95 aa)). Residues 630 to 650 (LTKCVTVLGLVIFMFFLNSFV) traverse the membrane as a helical segment. Position 651 (Pro-651) is a topological domain, cytoplasmic. The chain crosses the membrane as a helical span at residues 652-672 (GVHLDLGWIAILGAIWLLILA). Topologically, residues 673-687 (DIHDFEIILHRVEWA) are extracellular. The chain crosses the membrane as a helical span at residues 688–708 (TLLFFAALFILMEALAHLHLI). Residues 709–730 (EYVGEQTALLIKMVPEDQRLAA) lie on the Cytoplasmic side of the membrane. A helical transmembrane segment spans residues 731-751 (AIIVVVWVSAIASSLIDNIPF). Residues 752–773 (TATMIPVLLNLSRDPEISLPAP) lie on the Extracellular side of the membrane. The chain crosses the membrane as a helical span at residues 774-794 (PLMYALALGACLGGNGTLIGA). The Cytoplasmic segment spans residues 795–820 (SANVVCAGIAEQHGYGFSFMEFFRLG). A helical membrane pass occupies residues 821–841 (FPMMVVSCMVGMCYLLVAHVV). Over 842–845 (MGWN) the chain is Extracellular.

Belongs to the CitM (TC 2.A.11) transporter family.

The protein localises to the melanosome membrane. It catalyses the reaction chloride(in) = chloride(out). In terms of biological role, contributes to a melanosome-specific anion (chloride) current that modulates melanosomal pH for optimal tyrosinase activity required for melanogenesis and the melanosome maturation. One of the components of the mammalian pigmentary system. May serve as a key control point at which ethnic skin color variation is determined. Major determinant of brown and/or blue eye color. Seems to regulate the post-translational processing of tyrosinase, which catalyzes the limiting reaction in melanin synthesis. This Sus scrofa (Pig) protein is P protein (Oca2).